An 81-amino-acid polypeptide reads, in one-letter code: Sulfur carrier protein TusA (81 aa).

Catalysis depends on Cys-19, which acts as the Cysteine persulfide intermediate.

This sequence belongs to the sulfur carrier protein TusA family.

The protein resides in the cytoplasm. Sulfur carrier protein which probably makes part of a sulfur-relay system. This is Sulfur carrier protein TusA from Shewanella sp. (strain MR-4).